We begin with the raw amino-acid sequence, 382 residues long: Two-component response regulator ARR14 (382 aa).

The Response regulatory domain maps to 12–128 (RILVVDDDTS…ELKNIWQHVV (117 aa)). Asp63 carries the post-translational modification 4-aspartylphosphate. Residues 171-181 (CRNKKKKKKRS) are compositionally biased toward basic residues. Positions 171–193 (CRNKKKKKKRSVDRDDNEDDLLL) are disordered. Positions 199-202 (KKSR) match the Nuclear localization signal motif. Positions 202–252 (RVVWSIELHQQFVNAVNKLGIDKAVPKRILELMNVPGLSRENVASHLQKFR) form a DNA-binding region, myb-like GARP.

It belongs to the ARR family. Type-B subfamily. Binds the target DNA as a monomer. In terms of processing, two-component system major event consists of a His-to-Asp phosphorelay between a sensor histidine kinase (HK) and a response regulator (RR). In plants, the His-to-Asp phosphorelay involves an additional intermediate named Histidine-containing phosphotransfer protein (HPt). This multistep phosphorelay consists of a His-Asp-His-Asp sequential transfer of a phosphate group between first a His and an Asp of the HK protein, followed by the transfer to a conserved His of the HPt protein and finally the transfer to an Asp in the receiver domain of the RR protein. As to expression, predominantly expressed in young leaf tissue.

The protein localises to the nucleus. In terms of biological role, transcriptional activator that binds specifically to the DNA sequence 5'-[AG]GATT-3'. Functions as a response regulator involved in His-to-Asp phosphorelay signal transduction system. Phosphorylation of the Asp residue in the receiver domain activates the ability of the protein to promote the transcription of target genes. Could directly activate some type-A response regulators in response to cytokinins. This Arabidopsis thaliana (Mouse-ear cress) protein is Two-component response regulator ARR14 (ARR14).